The sequence spans 227 residues: Ribonuclease 3 (227 aa).

Residues 3 to 130 (TNAISKIIKY…LIGAIYLDGG (128 aa)) form the RNase III domain. Residue Glu43 coordinates Mg(2+). Residue Asp47 is part of the active site. The Mg(2+) site is built by Asn116 and Glu119. The active site involves Glu119. Positions 155–224 (DAKTILQEWA…ASLMLAKINY (70 aa)) constitute a DRBM domain.

Belongs to the ribonuclease III family. Homodimer. It depends on Mg(2+) as a cofactor.

It is found in the cytoplasm. It carries out the reaction Endonucleolytic cleavage to 5'-phosphomonoester.. Its function is as follows. Digests double-stranded RNA. Involved in the processing of primary rRNA transcript to yield the immediate precursors to the large and small rRNAs (23S and 16S). Processes some mRNAs, and tRNAs when they are encoded in the rRNA operon. Processes pre-crRNA and tracrRNA of type II CRISPR loci if present in the organism. This is Ribonuclease 3 from Ehrlichia ruminantium (strain Gardel).